We begin with the raw amino-acid sequence, 78 residues long: Dihydrofolate reductase type 2 (78 aa).

NADP(+) is bound by residues Lys-32 and Val-66–Tyr-69. Substrate is bound at residue Ile-68.

Homotetramer.

The enzyme catalyses (6S)-5,6,7,8-tetrahydrofolate + NADP(+) = 7,8-dihydrofolate + NADPH + H(+). Its pathway is cofactor biosynthesis; tetrahydrofolate biosynthesis; 5,6,7,8-tetrahydrofolate from 7,8-dihydrofolate: step 1/1. Key enzyme in folate metabolism. Catalyzes an essential reaction for de novo glycine and purine synthesis, and for DNA precursor synthesis. The chain is Dihydrofolate reductase type 2 from Escherichia coli.